Here is an 89-residue protein sequence, read N- to C-terminus: Large ribosomal subunit protein bL31B (89 aa).

This sequence belongs to the bacterial ribosomal protein bL31 family. Type B subfamily. As to quaternary structure, part of the 50S ribosomal subunit.

This is Large ribosomal subunit protein bL31B from Aeromonas hydrophila subsp. hydrophila (strain ATCC 7966 / DSM 30187 / BCRC 13018 / CCUG 14551 / JCM 1027 / KCTC 2358 / NCIMB 9240 / NCTC 8049).